We begin with the raw amino-acid sequence, 1016 residues long: EMILIN-1 (1016 aa).

The signal sequence occupies residues M1–A21. An EMI domain is found at H56–E131. Intrachain disulfides connect C60-C121, C85-C92, and C120-C129. The tract at residues P135–E182 is disordered. Low complexity predominate over residues P139 to S165. Residue N154 is glycosylated (N-linked (GlcNAc...) asparagine). Residues T216–Q256 are a coiled coil. Disordered stretches follow at residues E257–E288 and R383–S402. The segment covering G266 to P279 has biased composition (low complexity). Residues P356–P420 are a coiled coil. The span at E386–P397 shows a compositional bias: gly residues. Residue N415 is glycosylated (N-linked (GlcNAc...) asparagine). The disordered stretch occupies residues S416–L435. N455 and N561 each carry an N-linked (GlcNAc...) asparagine glycan. Positions A576–S603 form a coiled coil. The N-linked (GlcNAc...) asparagine glycan is linked to N658. The stretch at I685–S752 forms a coiled coil. N766 and N794 each carry an N-linked (GlcNAc...) asparagine glycan. Disordered stretches follow at residues D811–A863 and R942–S961. Positions G814–P864 constitute a Collagen-like domain. The span at P821–S839 shows a compositional bias: pro residues. Residues G835–E857 are a coiled coil. The C1q domain maps to A866–L1013.

In terms of assembly, homotrimer associated through a moderately stable interaction of the C-terminal globular C1q domains, allowing the nucleation of the triple helix and then a further quaternary assembly to higher-order polymers via intermolecular disulfide bonds. Interacts with EMILIN2. Interacts with EFEMP2; this interaction promotes the incorporation of EFEMP2 into the extracellular matrix. As to expression, distributed in tissues where resilience and elastic recoil are prominent. Highest levels in the adult small intestine, aorta, lung, uterus, and appendix and in the fetal spleen, kidney, lung, and heart; intermediate expression was detected in adult liver, ovary, colon, stomach, lymph node and spleen; adult heart, bladder, prostate, adrenal gland, mammary gland, placenta and kidney showed low expression whereas a series of other adult tissues, including skeletal muscle and different regions of adult brain show no expression. Detected in intramuscular nerve bundles, where it particularly localizes in the epineurium, the most external layer of dense connective tissue enclosing the nerve.

It is found in the secreted. The protein resides in the extracellular space. Its subcellular location is the extracellular matrix. Involved in elastic and collagen fibers formation. It is required for EFEMP2 deposition into the extracellular matrix, and collagen network assembly and cross-linking via protein-lysine 6-oxidase/LOX activity. May be responsible for anchoring smooth muscle cells to elastic fibers, and may be involved in the processes that regulate vessel assembly. Has cell adhesive capacity. In Homo sapiens (Human), this protein is EMILIN-1 (EMILIN1).